The following is a 137-amino-acid chain: Large ribosomal subunit protein uL16 (137 aa).

Belongs to the universal ribosomal protein uL16 family. As to quaternary structure, part of the 50S ribosomal subunit.

Binds 23S rRNA and is also seen to make contacts with the A and possibly P site tRNAs. The protein is Large ribosomal subunit protein uL16 of Stenotrophomonas maltophilia (strain R551-3).